A 150-amino-acid polypeptide reads, in one-letter code: Large ribosomal subunit protein bL9 (150 aa).

It belongs to the bacterial ribosomal protein bL9 family.

Its function is as follows. Binds to the 23S rRNA. This chain is Large ribosomal subunit protein bL9, found in Shewanella oneidensis (strain ATCC 700550 / JCM 31522 / CIP 106686 / LMG 19005 / NCIMB 14063 / MR-1).